The following is a 134-amino-acid chain: Small ribosomal subunit protein uS8c (134 aa).

As to quaternary structure, component of the chloroplast small ribosomal subunit (SSU). Mature 70S chloroplast ribosomes of higher plants consist of a small (30S) and a large (50S) subunit. The 30S small subunit contains 1 molecule of ribosomal RNA (16S rRNA) and 24 different proteins. The 50S large subunit contains 3 rRNA molecules (23S, 5S and 4.5S rRNA) and 33 different proteins.

The protein resides in the plastid. Its subcellular location is the chloroplast. Component of the chloroplast ribosome (chloro-ribosome), a dedicated translation machinery responsible for the synthesis of chloroplast genome-encoded proteins, including proteins of the transcription and translation machinery and components of the photosynthetic apparatus. This chain is Small ribosomal subunit protein uS8c (rps8), found in Spinacia oleracea (Spinach).